Consider the following 804-residue polypeptide: Exocyst complex component 6 (804 aa).

The protein belongs to the SEC15 family. As to quaternary structure, the exocyst complex is composed of EXOC1, EXOC2, EXOC3, EXOC4, EXOC5, EXOC6, EXOC7 and EXOC8. Interacts with CNTRL. Interacts with RAB11A in a GTP-dependent manner.

The protein resides in the cytoplasm. It localises to the perinuclear region. The protein localises to the cell projection. It is found in the growth cone. Its subcellular location is the midbody. The protein resides in the midbody ring. Component of the exocyst complex involved in the docking of exocytic vesicles with fusion sites on the plasma membrane. Together with RAB11A, RAB3IP, RAB8A, PARD3, PRKCI, ANXA2, CDC42 and DNMBP promotes transcytosis of PODXL to the apical membrane initiation sites (AMIS), apical surface formation and lumenogenesis. The sequence is that of Exocyst complex component 6 (EXOC6) from Homo sapiens (Human).